A 185-amino-acid chain; its full sequence is ATP synthase subunit b, chloroplastic (185 aa).

Residues 7–29 (SFVYLVGHCPFAGSFAFNTDILA) traverse the membrane as a helical segment.

It belongs to the ATPase B chain family. In terms of assembly, F-type ATPases have 2 components, F(1) - the catalytic core - and F(0) - the membrane proton channel. F(1) has five subunits: alpha(3), beta(3), gamma(1), delta(1), epsilon(1). F(0) has four main subunits: a(1), b(1), b'(1) and c(10-14). The alpha and beta chains form an alternating ring which encloses part of the gamma chain. F(1) is attached to F(0) by a central stalk formed by the gamma and epsilon chains, while a peripheral stalk is formed by the delta, b and b' chains.

It is found in the plastid. Its subcellular location is the chloroplast thylakoid membrane. Functionally, f(1)F(0) ATP synthase produces ATP from ADP in the presence of a proton or sodium gradient. F-type ATPases consist of two structural domains, F(1) containing the extramembraneous catalytic core and F(0) containing the membrane proton channel, linked together by a central stalk and a peripheral stalk. During catalysis, ATP synthesis in the catalytic domain of F(1) is coupled via a rotary mechanism of the central stalk subunits to proton translocation. Its function is as follows. Component of the F(0) channel, it forms part of the peripheral stalk, linking F(1) to F(0). The chain is ATP synthase subunit b, chloroplastic from Dioscorea elephantipes (Elephant's foot yam).